Reading from the N-terminus, the 212-residue chain is Adenylate kinase (212 aa).

ATP is bound at residue 10–15; it reads GAGKGT. The interval 30–59 is NMP; sequence STGDMFRAAMANQTEMGVLAKSYIDKGELV. AMP-binding positions include T31, R36, 57–59, 86–89, and Q93; these read ELV and GYPR. The LID stretch occupies residues 127–159; the sequence is GRIIHRVTGETFHKVFNPPVDYKEEDYYQREDD. ATP contacts are provided by residues R128 and 137-138; that span reads TF. 2 residues coordinate AMP: R156 and R167. Q195 serves as a coordination point for ATP.

This sequence belongs to the adenylate kinase family. Monomer.

Its subcellular location is the cytoplasm. The enzyme catalyses AMP + ATP = 2 ADP. The protein operates within purine metabolism; AMP biosynthesis via salvage pathway; AMP from ADP: step 1/1. Catalyzes the reversible transfer of the terminal phosphate group between ATP and AMP. Plays an important role in cellular energy homeostasis and in adenine nucleotide metabolism. In Streptococcus pneumoniae (strain JJA), this protein is Adenylate kinase.